A 490-amino-acid polypeptide reads, in one-letter code: ATP synthase subunit alpha 1 (490 aa).

It belongs to the ATPase alpha/beta chains family. As to quaternary structure, F-type ATPases have 2 components, CF(1) - the catalytic core - and CF(0) - the membrane proton channel. CF(1) has five subunits: alpha(3), beta(3), gamma(1), delta(1), epsilon(1). CF(0) has three main subunits: a(1), b(2) and c(9-12). The alpha and beta chains form an alternating ring which encloses part of the gamma chain. CF(1) is attached to CF(0) by a central stalk formed by the gamma and epsilon chains, while a peripheral stalk is formed by the delta and b chains.

It is found in the cell inner membrane. The catalysed reaction is ATP + H2O + 4 H(+)(in) = ADP + phosphate + 5 H(+)(out). In terms of biological role, produces ATP from ADP in the presence of a proton gradient across the membrane. The alpha chain is a regulatory subunit. The sequence is that of ATP synthase subunit alpha 1 from Legionella pneumophila (strain Paris).